The sequence spans 390 residues: Flap endonuclease 1-2 (390 aa).

The N-domain stretch occupies residues 1–108 (MGIHQLMQFL…GELARRKKLK (108 aa)). Asp-34 contacts Mg(2+). Arg-74 serves as a coordination point for DNA. 5 residues coordinate Mg(2+): Asp-90, Glu-162, Glu-164, Asp-183, and Asp-185. An I-domain region spans residues 126–254 (QALLQNQRTT…GTAYKLIKEY (129 aa)). Residue Glu-162 participates in DNA binding. Positions 232 and 234 each coordinate DNA. A Mg(2+)-binding site is contributed by Asp-234. Residues 348-356 (FQSRLENFF) form an interaction with PCNA region. The disordered stretch occupies residues 359 to 390 (TTKIIHPNNSKAKAKSNKKTEQPQKSGGKKKI).

This sequence belongs to the XPG/RAD2 endonuclease family. FEN1 subfamily. In terms of assembly, interacts with PCNA. Three molecules of FEN1 bind to one PCNA trimer with each molecule binding to one PCNA monomer. PCNA stimulates the nuclease activity without altering cleavage specificity. Requires Mg(2+) as cofactor. In terms of processing, phosphorylated. Phosphorylation upon DNA damage induces relocalization to the nuclear plasma.

It is found in the nucleus. It localises to the nucleolus. The protein localises to the nucleoplasm. Its subcellular location is the mitochondrion. Structure-specific nuclease with 5'-flap endonuclease and 5'-3' exonuclease activities involved in DNA replication and repair. During DNA replication, cleaves the 5'-overhanging flap structure that is generated by displacement synthesis when DNA polymerase encounters the 5'-end of a downstream Okazaki fragment. It enters the flap from the 5'-end and then tracks to cleave the flap base, leaving a nick for ligation. Also involved in the long patch base excision repair (LP-BER) pathway, by cleaving within the apurinic/apyrimidinic (AP) site-terminated flap. Acts as a genome stabilization factor that prevents flaps from equilibrating into structures that lead to duplications and deletions. Also possesses 5'-3' exonuclease activity on nicked or gapped double-stranded DNA, and exhibits RNase H activity. Also involved in replication and repair of rDNA and in repairing mitochondrial DNA. In Paramecium tetraurelia, this protein is Flap endonuclease 1-2.